The following is a 370-amino-acid chain: Phospho-N-acetylmuramoyl-pentapeptide-transferase (370 aa).

The next 10 helical transmembrane spans lie at 3–23 (QIIIAGAVSFLVAIFTTPVLI), 54–74 (GLAILAGILVAYVVAGLYGLL), 79–99 (AFTASGLLVLGLTLGLGAVGF), 118–138 (AKLISQLVLALLFGFLVLRFP), 161–181 (LAVGGTVIGTIVFLIFMYILI), 197–217 (LAAGVTAIVMGSYSLMTFWQF), 238–258 (LAVLAAAGLGGCLGFLWWNAA), 262–282 (IFMGDTGSLALGGLVAGISVT), 290–310 (IIIGALFVIETVSVVIQIVVF), and 341–361 (FWLLAAMAAMAGVAIFYGDWL).

Belongs to the glycosyltransferase 4 family. MraY subfamily. It depends on Mg(2+) as a cofactor.

It is found in the cell membrane. The catalysed reaction is UDP-N-acetyl-alpha-D-muramoyl-L-alanyl-gamma-D-glutamyl-meso-2,6-diaminopimeloyl-D-alanyl-D-alanine + di-trans,octa-cis-undecaprenyl phosphate = di-trans,octa-cis-undecaprenyl diphospho-N-acetyl-alpha-D-muramoyl-L-alanyl-D-glutamyl-meso-2,6-diaminopimeloyl-D-alanyl-D-alanine + UMP. It participates in cell wall biogenesis; peptidoglycan biosynthesis. Catalyzes the initial step of the lipid cycle reactions in the biosynthesis of the cell wall peptidoglycan: transfers peptidoglycan precursor phospho-MurNAc-pentapeptide from UDP-MurNAc-pentapeptide onto the lipid carrier undecaprenyl phosphate, yielding undecaprenyl-pyrophosphoryl-MurNAc-pentapeptide, known as lipid I. This Corynebacterium aurimucosum (strain ATCC 700975 / DSM 44827 / CIP 107346 / CN-1) (Corynebacterium nigricans) protein is Phospho-N-acetylmuramoyl-pentapeptide-transferase.